Here is a 134-residue protein sequence, read N- to C-terminus: Arsenate reductase (134 aa).

Residues Cys-11, Cys-83, and Cys-90 each act as nucleophile in the active site. 2 disulfide bridges follow: Cys-11–Cys-83 and Cys-83–Cys-90.

The protein belongs to the low molecular weight phosphotyrosine protein phosphatase family. Thioredoxin-coupled ArsC subfamily.

The protein localises to the cytoplasm. The enzyme catalyses arsenate + [thioredoxin]-dithiol + H(+) = arsenite + [thioredoxin]-disulfide + H2O. In terms of biological role, catalyzes the reduction of arsenate [As(V)] to arsenite [As(III)]. In Bacillus cereus (strain G9842), this protein is Arsenate reductase.